The following is a 432-amino-acid chain: Glutamate-1-semialdehyde 2,1-aminomutase (432 aa).

Lys269 carries the post-translational modification N6-(pyridoxal phosphate)lysine.

The protein belongs to the class-III pyridoxal-phosphate-dependent aminotransferase family. HemL subfamily. Homodimer. It depends on pyridoxal 5'-phosphate as a cofactor.

The protein localises to the cytoplasm. The catalysed reaction is (S)-4-amino-5-oxopentanoate = 5-aminolevulinate. The protein operates within porphyrin-containing compound metabolism; protoporphyrin-IX biosynthesis; 5-aminolevulinate from L-glutamyl-tRNA(Glu): step 2/2. The chain is Glutamate-1-semialdehyde 2,1-aminomutase from Desulforamulus reducens (strain ATCC BAA-1160 / DSM 100696 / MI-1) (Desulfotomaculum reducens).